The chain runs to 131 residues: Proline-rich protein 3 (131 aa).

The segment at 1 to 77 (LHRGPPGSRG…KEQRNPRRLK (77 aa)) is disordered. A compositionally biased stretch (pro residues) spans 12 to 25 (MIPPLLSLPPPPRG). Over residues 28–44 (PLRGGLGPRSGPYGRGW) the composition is skewed to gly residues. Residues 98–126 (KSDRPVCRHFAKKGHCRYEDLCAFYHPGA) form a C3H1-type zinc finger.

The polypeptide is Proline-rich protein 3 (PRR3) (Sus scrofa (Pig)).